The chain runs to 784 residues: MDADDSRAPKGSLRKFLEHLSGAGKAIGVLTSGGDAQGMNAAVRAVVRMGIYVGAKVYFIYEGYQGMVDGGSNIAEADWESVSSILQVGGTIIGSARCQAFRTREGRLKAACNLLQRGITNLCVIGGDGSLTGANLFRKEWSGLLEELARNGQIDKEAVQKYAYLNVVGMVGSIDNDFCGTDMTIGTDSALHRIIEVVDAIMTTAQSHQRTFVLEVMGRHCGYLALVSALACGADWVFLPESPPEEGWEEQMCVKLSENRARKKRLNIIIVAEGAIDTQNKPITSEKIKELVVTQLGYDTRVTILGHVQRGGTPSAFDRILASRMGVEAVIALLEATPDTPACVVSLNGNHAVRLPLMECVQMTQDVQKAMDERRFQDAVRLRGRSFAGNLNTYKRLAIKLPDDQIPKTNCNVAVINVGAPAAGMNAAVRSAVRVGIADGHRMLAIYDGFDGFAKGQIKEIGWTDVGGWTGQGGSILGTKRVLPGKYLEEIATQMRTHSINALLIIGGFEAYLGLLELSAAREKHEEFCVPMVMVPATVSNNVPGSDFSIGADTALNTITDTCDRIKQSASGTKRRVFIIETMGGYCGYLANMGGLAAGADAAYIFEEPFDIRDLQSNVEHLTEKMKTTIQRGLVLRNESCSENYTTDFIYQLYSEEGKGVFDCRKNVLGHMQQGGAPSPFDRNFGTKISARAMEWITAKLKEARGRGKKFTTDDSICVLGISKRNVIFQPVAELKKQTDFEHRIPKEQWWLKLRPLMKILAKYKASYDVSDSGQLEHVQPWSV.

N-acetylmethionine is present on Met1. The tract at residues 1-399 (MDADDSRAPK…NLNTYKRLAI (399 aa)) is N-terminal catalytic PFK domain 1. Phosphoserine occurs at positions 6, 12, and 21. Residues Gly34, 97–98 (RC), and 127–130 (GDGS) each bind ATP. Residue Asp128 coordinates Mg(2+). Position 142 is a phosphoserine (Ser142). Substrate is bound by residues 173-175 (SID), Arg210, 217-219 (MGR), Glu273, Arg301, and 307-310 (HVQR). The Proton acceptor role is filled by Asp175. A Phosphoserine modification is found at Ser386. At Lys395 the chain carries N6-acetyllysine. The interdomain linker stretch occupies residues 400 to 411 (KLPDDQIPKTNC). The segment at 412–784 (NVAVINVGAP…QLEHVQPWSV (373 aa)) is C-terminal regulatory PFK domain 2. Arg481 contributes to the beta-D-fructose 2,6-bisphosphate binding site. The residue at position 486 (Lys486) is an N6-acetyllysine. Beta-D-fructose 2,6-bisphosphate contacts are provided by residues 538-542 (TVSNN), Arg576, 583-585 (MGG), and Glu639. Residue Ser540 is glycosylated (O-linked (GlcNAc) serine). Tyr651 carries the post-translational modification Phosphotyrosine. Beta-D-fructose 2,6-bisphosphate contacts are provided by residues Arg665 and 671–674 (HMQQ). N6-acetyllysine is present on Lys688. Arg744 contacts beta-D-fructose 2,6-bisphosphate. Phosphoserine is present on Ser783.

Belongs to the phosphofructokinase type A (PFKA) family. ATP-dependent PFK group I subfamily. Eukaryotic two domain clade 'E' sub-subfamily. Homo- and heterotetramers. Phosphofructokinase (PFK) enzyme functions as a tetramer composed of different combinations of 3 types of subunits, called PFKM (where M stands for Muscle), PFKL (Liver) and PFKP (Platelet). The composition of the PFK tetramer differs according to the tissue type it is present in. In muscles, it is composed of 4 PFKM subunits (also called M4). In the liver, the predominant form is a tetramer of PFKL subunits (L4). In erythrocytes, both PFKM and PFKL subunits randomly tetramerize to form M4, L4 and other combinations (ML3, M2L2, M3L). In platelets, brain and fibroblasts, PFK contains a higher proportion of PFKP subunits. The kinetic and regulatory properties of the tetrameric enzyme are dependent on the subunit composition, hence can vary across tissues. Interacts with ATG4B; promoting phosphorylation of ATG4B. The cofactor is Mg(2+). Phosphorylation at Ser-386 promotes interaction with ATG4B. Post-translationally, glcNAcylation decreases enzyme activity.

It is found in the cytoplasm. The enzyme catalyses beta-D-fructose 6-phosphate + ATP = beta-D-fructose 1,6-bisphosphate + ADP + H(+). The protein operates within carbohydrate degradation; glycolysis; D-glyceraldehyde 3-phosphate and glycerone phosphate from D-glucose: step 3/4. Allosterically activated by ADP, AMP, or fructose 2,6-bisphosphate, and allosterically inhibited by ATP or citrate. Its function is as follows. Catalyzes the phosphorylation of D-fructose 6-phosphate to fructose 1,6-bisphosphate by ATP, the first committing step of glycolysis. This Homo sapiens (Human) protein is ATP-dependent 6-phosphofructokinase, platelet type (PFKP).